The chain runs to 360 residues: Peptide chain release factor 1 (360 aa).

Glutamine 235 is modified (N5-methylglutamine). The segment at lysine 285–serine 304 is disordered.

Belongs to the prokaryotic/mitochondrial release factor family. In terms of processing, methylated by PrmC. Methylation increases the termination efficiency of RF1.

The protein localises to the cytoplasm. In terms of biological role, peptide chain release factor 1 directs the termination of translation in response to the peptide chain termination codons UAG and UAA. The sequence is that of Peptide chain release factor 1 from Edwardsiella ictaluri (strain 93-146).